Reading from the N-terminus, the 148-residue chain is UPF0260 protein YE2365 (148 aa).

Belongs to the UPF0260 family.

This chain is UPF0260 protein YE2365, found in Yersinia enterocolitica serotype O:8 / biotype 1B (strain NCTC 13174 / 8081).